Here is a 142-residue protein sequence, read N- to C-terminus: Hemoglobin subunit alpha (142 aa).

Residues 2-142 (VLSPADKTNI…VSTVLTSKYR (141 aa)) enclose the Globin domain. Ser4 carries the post-translational modification Phosphoserine. Lys8 is modified (N6-succinyllysine). Thr9 carries the phosphothreonine modification. Lys12 carries the post-translational modification N6-succinyllysine. An N6-acetyllysine; alternate modification is found at Lys17. N6-succinyllysine; alternate is present on Lys17. Tyr25 is modified (phosphotyrosine). Ser36 bears the Phosphoserine mark. An N6-succinyllysine modification is found at Lys41. Position 50 is a phosphoserine (Ser50). Residue His59 participates in O2 binding. His88 serves as a coordination point for heme b. Ser103 is subject to Phosphoserine. Thr109 is subject to Phosphothreonine. A Phosphoserine modification is found at Ser125. Phosphothreonine occurs at positions 135 and 138. Ser139 bears the Phosphoserine mark.

This sequence belongs to the globin family. As to quaternary structure, heterotetramer of two alpha chains and two beta chains. As to expression, red blood cells.

In terms of biological role, involved in oxygen transport from the lung to the various peripheral tissues. Functionally, hemopressin acts as an antagonist peptide of the cannabinoid receptor CNR1. Hemopressin-binding efficiently blocks cannabinoid receptor CNR1 and subsequent signaling. The sequence is that of Hemoglobin subunit alpha (HBA) from Canis latrans (Coyote).